We begin with the raw amino-acid sequence, 308 residues long: Low density lipoprotein receptor adapter protein 1 (308 aa).

M1 carries the post-translational modification N-acetylmethionine. S14 carries the phosphoserine modification. One can recognise a PID domain in the interval L41 to R195. A disordered region spans residues E179–S201. Phosphoserine is present on residues S198 and S201. A Clathrin box motif is present at residues L211–E215. An AP-2 complex binding region spans residues W248 to L275. A [DE]-X(1,2)-F-X-X-[FL]-X-X-X-R motif motif is present at residues E256–R265. The tract at residues P288 to F308 is disordered.

As to quaternary structure, interacts (via PID domain) with LDLR (via NPXY motif). Binds to soluble clathrin trimers. Interacts with AP2B1; the interaction mediates the association with the AP-2 complex. Interacts with VLDLR. Interacts with LRP2.

It is found in the cytoplasm. Adapter protein (clathrin-associated sorting protein (CLASP)) required for efficient endocytosis of the LDL receptor (LDLR) in polarized cells such as hepatocytes and lymphocytes, but not in non-polarized cells (fibroblasts). May be required for LDL binding and internalization but not for receptor clustering in coated pits. May facilitate the endocytosis of LDLR and LDLR-LDL complexes from coated pits by stabilizing the interaction between the receptor and the structural components of the pits. May also be involved in the internalization of other LDLR family members. Binds to phosphoinositides, which regulate clathrin bud assembly at the cell surface. Required for trafficking of LRP2 to the endocytic recycling compartment which is necessary for LRP2 proteolysis, releasing a tail fragment which translocates to the nucleus and mediates transcriptional repression. This Mus musculus (Mouse) protein is Low density lipoprotein receptor adapter protein 1.